A 472-amino-acid polypeptide reads, in one-letter code: Glycerol-3-phosphate acyltransferase, chloroplastic (472 aa).

Residues 1–102 constitute a chloroplast transit peptide; that stretch reads MLVLSSSAPP…EIPVKKEDDN (102 aa). An HXXXXD motif motif is present at residues 241–246; it reads HQSEAD.

Belongs to the GPAT/DAPAT family.

It is found in the plastid. Its subcellular location is the chloroplast stroma. It carries out the reaction sn-glycerol 3-phosphate + an acyl-CoA = a 1-acyl-sn-glycero-3-phosphate + CoA. It functions in the pathway phospholipid metabolism; CDP-diacylglycerol biosynthesis; CDP-diacylglycerol from sn-glycerol 3-phosphate: step 1/3. In terms of biological role, esterifies acyl-group from acyl-ACP to the sn-1 position of glycerol-3-phosphate. The enzyme from chilling-resistant plants discriminates against non-fluid palmitic acid and selects oleic acid whereas the enzyme from sensitive plants accepts both fatty acids. This is an oleate-selective acyltransferase. The protein is Glycerol-3-phosphate acyltransferase, chloroplastic (GAT) of Spinacia oleracea (Spinach).